The primary structure comprises 395 residues: Proteinase-activated receptor 2 (395 aa).

The first 25 residues, 1 to 25, serve as a signal peptide directing secretion; sequence MRSPSAAWLLGGVLLLAASGSCNRT. Asn23 and Asn29 each carry an N-linked (GlcNAc...) asparagine glycan. Positions 26–34 are cleaved as a propeptide — removed for receptor activation; that stretch reads VPGNKSKGR. Residues 35–69 lie on the Extracellular side of the membrane; the sequence is SLIGNVDNSPVVAGRGVTVKPGFSVDEFSTSVLTG. Residues 70 to 99 traverse the membrane as a helical segment; the sequence is KLTTVFLPVVYTIVFVVGLPSNGMALWVFL. At 100-106 the chain is on the cytoplasmic side; sequence FRTKKKH. The helical transmembrane segment at 107–135 threads the bilayer; it reads PAVIYMANLALADLLSVTWFPLKIAYHIH. Residues 136–147 lie on the Extracellular side of the membrane; the sequence is GNNWIYGESLCK. A disulfide bridge connects residues Cys146 and Cys224. A helical membrane pass occupies residues 148–175; sequence VLIGFFYGNMYCSILFMTCLSVQRYWVI. Residues 176 to 181 lie on the Cytoplasmic side of the membrane; the sequence is VNPMVH. The chain crosses the membrane as a helical span at residues 182 to 209; sequence PKKQANIAIGVSLGIWLLILLLTIPLYV. Residues 210–233 are Extracellular-facing; the sequence is VKQTSYIRALNITTCHDVLPEEVL. A glycan (N-linked (GlcNAc...) asparagine) is linked at Asn220. A helical membrane pass occupies residues 234 to 267; it reads VGDMFNYFLSLAIGVFLFPAFLTASAYVLMIRTL. Residues 268–275 lie on the Cytoplasmic side of the membrane; the sequence is QSSAMDES. A helical transmembrane segment spans residues 276-315; it reads SGKKRRRAIKLIVTVLAMYLICFTPSNLLLVVHYFLIKTR. Residues 316–321 lie on the Extracellular side of the membrane; it reads GQSHVY. Residues 322–345 traverse the membrane as a helical segment; the sequence is ALYIVALCLSTLNSCIDPFVYYFI. The Cytoplasmic segment spans residues 346-395; sequence SQDFRDHAKNALLCRSVRTVKRMQVSLSSKKFSGKSSSYSSSSTSVKGSY. Residue Cys359 is the site of S-palmitoyl cysteine attachment.

This sequence belongs to the G-protein coupled receptor 1 family. As to quaternary structure, interacts with TLR4, COPS5 and TMED2. Interacts with GNAQ, GNA11, GNA12, GNA13 and GNA14. In terms of processing, a proteolytic cleavage generates a new N-terminus that functions as a tethered ligand. Activating serine proteases include trypsin, mast cell tryptase, coagulation factors VII and Xa, myeloblastin/PRTN3 and membrane-type serine protease 1/ST14. Proposed subsequent cleavage by serine proteases is leading to receptor deactivation and include neutrophil elastase and cathepsin G. At least in part, implicated proteases are also shown to activate the receptor; the glycosylation status of the receptor is thought to contribute to the difference. N-glycosylated and sialylated. Post-translationally, multiple phosphorylated on serine and threonine residues in the cytoplasmic region upon receptor activation; required for receptor desensitization and recruitment of beta-arrestin. In terms of processing, monoubiquitinated by CBL at the plasma membrane and in early endosomes; not required for receptor endocytosis but for translocation to late endosomes or lysosomes. Deubiquitination involves STAMBP and USP8; required for lysosomal trafficking and receptor degradation.

The protein resides in the cell membrane. Receptor for trypsin and trypsin-like enzymes coupled to G proteins. Its function is mediated through the activation of several signaling pathways including phospholipase C (PLC), intracellular calcium, mitogen-activated protein kinase (MAPK), I-kappaB kinase/NF-kappaB and Rho. Can also be transactivated by cleaved F2R/PAR1. Involved in modulation of inflammatory responses and regulation of innate and adaptive immunity, and acts as a sensor for proteolytic enzymes generated during infection. Generally is promoting inflammation. Can signal synergistically with TLR4 and probably TLR2 in inflammatory responses and modulates TLR3 signaling. Has a protective role in establishing the endothelial barrier; the activity involves coagulation factor X. Regulates endothelial cell barrier integrity during neutrophil extravasation, probably following proteolytic cleavage by PRTN3. Proposed to have a bronchoprotective role in airway epithelium, but also shown to compromise the airway epithelial barrier by interrupting E-cadherin adhesion. Involved in the regulation of vascular tone; activation results in hypotension presumably mediated by vasodilation. Associates with a subset of G proteins alpha subunits such as GNAQ, GNA11, GNA14, GNA12 and GNA13, but probably not with G(o) alpha, G(i) subunit alpha-1 and G(i) subunit alpha-2. Believed to be a class B receptor which internalizes as a complex with arrestin and traffic with it to endosomal vesicles, presumably as desensitized receptor, for extended periods of time. Mediates inhibition of TNF-alpha stimulated JNK phosphorylation via coupling to GNAQ and GNA11; the function involves dissociation of RIPK1 and TRADD from TNFR1. Mediates phosphorylation of nuclear factor NF-kappa-B RELA subunit at 'Ser-536'; the function involves IKBKB and is predominantly independent of G proteins. Involved in cellular migration. Involved in cytoskeletal rearrangement and chemotaxis through beta-arrestin-promoted scaffolds; the function is independent of GNAQ and GNA11 and involves promotion of cofilin dephosphorylation and actin filament severing. Induces redistribution of COPS5 from the plasma membrane to the cytosol and activation of the JNK cascade is mediated by COPS5. Involved in the recruitment of leukocytes to the sites of inflammation and is the major PAR receptor capable of modulating eosinophil function such as pro-inflammatory cytokine secretion, superoxide production and degranulation. During inflammation promotes dendritic cell maturation, trafficking to the lymph nodes and subsequent T-cell activation. Involved in antimicrobial response of innate immune cells; activation enhances phagocytosis of Gram-positive and killing of Gram-negative bacteria. Acts synergistically with interferon-gamma in enhancing antiviral responses. Probably mediates activation of pro-inflammatory and pro-fibrotic responses in fibroblasts, triggered by coagulation factor Xa (F10). Probably mediates activation of barrier protective signaling responses in endothelial cells, triggered by coagulation factor Xa (F10). This Bos taurus (Bovine) protein is Proteinase-activated receptor 2 (F2RL1).